The sequence spans 366 residues: Peptide chain release factor 2 (366 aa).

Q251 bears the N5-methylglutamine mark.

This sequence belongs to the prokaryotic/mitochondrial release factor family. Methylated by PrmC. Methylation increases the termination efficiency of RF2.

Its subcellular location is the cytoplasm. Functionally, peptide chain release factor 2 directs the termination of translation in response to the peptide chain termination codons UGA and UAA. The protein is Peptide chain release factor 2 (prfB) of Listeria monocytogenes serovar 1/2a (strain ATCC BAA-679 / EGD-e).